A 142-amino-acid polypeptide reads, in one-letter code: Large ribosomal subunit protein uL13 (142 aa).

The protein belongs to the universal ribosomal protein uL13 family. In terms of assembly, part of the 50S ribosomal subunit.

Functionally, this protein is one of the early assembly proteins of the 50S ribosomal subunit, although it is not seen to bind rRNA by itself. It is important during the early stages of 50S assembly. The sequence is that of Large ribosomal subunit protein uL13 from Actinobacillus succinogenes (strain ATCC 55618 / DSM 22257 / CCUG 43843 / 130Z).